A 290-amino-acid chain; its full sequence is ATP synthase gamma chain (290 aa).

Belongs to the ATPase gamma chain family. As to quaternary structure, F-type ATPases have 2 components, CF(1) - the catalytic core - and CF(0) - the membrane proton channel. CF(1) has five subunits: alpha(3), beta(3), gamma(1), delta(1), epsilon(1). CF(0) has three main subunits: a, b and c.

It localises to the cell membrane. Produces ATP from ADP in the presence of a proton gradient across the membrane. The gamma chain is believed to be important in regulating ATPase activity and the flow of protons through the CF(0) complex. This Wolbachia sp. subsp. Brugia malayi (strain TRS) protein is ATP synthase gamma chain.